A 221-amino-acid polypeptide reads, in one-letter code: Glutathione peroxidase 6 (221 aa).

A signal peptide spans 1-19 (MFQQFQASCLVLFFLVGFA). The active site involves U73. A non-standard amino acid (selenocysteine) is located at residue U73.

It belongs to the glutathione peroxidase family. Expressed in olfactory epithelium and embryos.

Its subcellular location is the secreted. It carries out the reaction 2 glutathione + H2O2 = glutathione disulfide + 2 H2O. This chain is Glutathione peroxidase 6 (GPX6), found in Homo sapiens (Human).